The sequence spans 306 residues: Agmatinase (306 aa).

His-126, Asp-149, His-151, Asp-153, Asp-230, and Asp-232 together coordinate Mn(2+).

This sequence belongs to the arginase family. Agmatinase subfamily. It depends on Mn(2+) as a cofactor.

The enzyme catalyses agmatine + H2O = urea + putrescine. It functions in the pathway amine and polyamine biosynthesis; putrescine biosynthesis via agmatine pathway; putrescine from agmatine: step 1/1. Functionally, catalyzes the formation of putrescine from agmatine. The polypeptide is Agmatinase (Serratia proteamaculans (strain 568)).